Consider the following 71-residue polypeptide: Protein Tlp homolog (71 aa).

The tract at residues 30-56 (ETLQNNSLSRDQRQAIMEKNKRREESI) is disordered. Residues 39–56 (RDQRQAIMEKNKRREESI) are compositionally biased toward basic and acidic residues.

This sequence belongs to the Tlp family.

The chain is Protein Tlp homolog from Desulforamulus reducens (strain ATCC BAA-1160 / DSM 100696 / MI-1) (Desulfotomaculum reducens).